A 311-amino-acid polypeptide reads, in one-letter code: Porphobilinogen deaminase (311 aa).

At Cys241 the chain carries S-(dipyrrolylmethanemethyl)cysteine.

It belongs to the HMBS family. In terms of assembly, monomer. Dipyrromethane is required as a cofactor.

The enzyme catalyses 4 porphobilinogen + H2O = hydroxymethylbilane + 4 NH4(+). Its pathway is porphyrin-containing compound metabolism; protoporphyrin-IX biosynthesis; coproporphyrinogen-III from 5-aminolevulinate: step 2/4. Tetrapolymerization of the monopyrrole PBG into the hydroxymethylbilane pre-uroporphyrinogen in several discrete steps. This Bacillus pumilus (strain SAFR-032) protein is Porphobilinogen deaminase.